We begin with the raw amino-acid sequence, 292 residues long: Tricin synthase 2 (292 aa).

The disordered stretch occupies residues 21 to 46; sequence RTTPASRVSSTAMAAANGDASHGANG. Residues 23–32 are compositionally biased toward polar residues; it reads TPASRVSSTA. S-adenosyl-L-methionine contacts are provided by residues serine 108, glutamate 130, 132-133, serine 138, aspartate 156, and alanine 185; that span reads GV. Residue aspartate 208 participates in a divalent metal cation binding. Residue aspartate 210 participates in S-adenosyl-L-methionine binding. Positions 234 and 235 each coordinate a divalent metal cation.

The protein belongs to the class I-like SAM-binding methyltransferase superfamily. Cation-dependent O-methyltransferase family. CCoAMT subfamily. Mg(2+) is required as a cofactor. The cofactor is Mn(2+). In terms of tissue distribution, expressed in stems only.

It catalyses the reaction tricetin + 2 S-adenosyl-L-methionine = 3',5'-di-O-methyltricetin + 2 S-adenosyl-L-homocysteine + 2 H(+). In terms of biological role, catalyzes the stepwise methylation of tricetin to its 3'-mono- and 3',5'-dimethyl ethers. No 3',4',5'-trimethylated ester derivatives are produced. Can use caffeoyl CoA, 5-hydroxyferulic acid, luteolin, tricetin, quercetin, myrcetin and 7,8-dihydroxyflavone as substrates, but not naringenin, apigenin or kaempferol. The 2,3-double bond and the O-dihydroxyl group of the substrate are both required for catalytic activity of the enzyme. This is Tricin synthase 2 (ROMT-17) from Oryza sativa subsp. japonica (Rice).